The following is a 221-amino-acid chain: Histone H1C (221 aa).

Disordered regions lie at residues 1–43 (MSDP…PPVS) and 113–221 (AAKK…AKKA). Residues 38–112 (THPPVSEMVF…GALGSFKLPA (75 aa)) enclose the H15 domain. 2 stretches are compositionally biased toward basic residues: residues 141 to 167 (KVKKTIAKKPKAATATKIKKPVAKTTK) and 175 to 221 (AAKK…AKKA).

Belongs to the histone H1/H5 family.

The protein resides in the nucleus. It localises to the chromosome. In terms of biological role, histones H1 are necessary for the condensation of nucleosome chains into higher-order structures. The protein is Histone H1C of Chironomus tentans (Midge).